We begin with the raw amino-acid sequence, 449 residues long: MVYSQLQALKRNYYLDWLRNLHKGKPKTFAITFMGVKQICTIEGENLKAIQATNFKDFGLEPMRRKTKGAMPFADKGISTTDGKNWEFARFLVKPFFYREVYASIDRVDPYVRKLFGLLPEEDGVTFDIQPLIQRWFLDLTSEFIFGKTMDSMTYPDRANITWTMLDVLRGGRLRIQMYKFLWAFNWNWWLKAVYEVHDFVNVHIRSTYKELAAREQRIRDGLPVGPERVDLLWYMATHVRDEEELRSQLCLVFVPNNDTTSIFISNCIWHLARDHEAWQKLRKEVLDYGDQPITFESLRSMPYLNGVLNETHRLTPNNIVQVRACLNDSVLPLGGGPDGKSPLYVNKGDLVSVTKTVMYRDPDIWGPDVDVFRPERFFGVRGNWNFLPFGGGPRRCPAQMMVQTESAYMLFQLAKRYSRLECRDPEPYTAVMRIGPSNINGVKIAFYK.

A helical transmembrane segment spans residues 28 to 44; it reads TFAITFMGVKQICTIEG. Cys-397 serves as a coordination point for heme.

Belongs to the cytochrome P450 family. It depends on heme as a cofactor.

Its subcellular location is the membrane. The enzyme catalyses (3E,5S)-3-[(2E,4E,8S,10E,12Z)-1-hydroxy-4,8-dimethyltetradeca-2,4,10,12-tetraen-1-ylidene]-5-[(4-hydroxyphenyl)methyl]pyrrolidine-2,4-dione + reduced [NADPH--hemoprotein reductase] + O2 = 3-[(2E,4E,8S,10E,12Z)-4,8-dimethyltetradeca-2,4,10,12-tetraenoyl]-4-hydroxy-5-(4-hydroxyphenyl)-1,2-dihydropyridin-2-one + oxidized [NADPH--hemoprotein reductase] + 2 H2O. The protein operates within mycotoxin biosynthesis. Functionally, cytochrome P450 monooxygenase; part of the gene cluster that mediates the biosynthesis of ilicicolin H, a 4-hydroxy-2-pyridonealkaloid that has potent and broad antifungal activities by inhibiting the mitochondrial respiration chain. IliC catalyzes the ring expansion of the tetramate intermediate to the acyclic 2-pyridone intermediate that contains the trans bis-diene chain. The biosynthesis of ilicicolin H starts with formation of the tetramic acid by the hybrid PKS-NRPS synthetase iliA with the partnering trans-enoyl reductase iliB since iliA lacks a designated enoylreductase (ER) domain. The cytochrome P450 monooxygenase iliC then catalyzes the ring expansion of the tetramate to the acyclic 2-pyridone. The pericyclase iliD further converts the acyclic 2-pyridone into 8-epi-ilicicolin H. 8-epi-ilicicolin H might then spontaneously convert to ilicicolin H since ilicicolin H is produced in the absence of the epimerase iliE, in contrast to what was observed for the Talaromyces variabilis ilicolin H biosynthetic pathway. The sequence is that of Cytochrome P450 monooxygenase iliC from Hypocrea jecorina (strain QM6a) (Trichoderma reesei).